We begin with the raw amino-acid sequence, 408 residues long: Putative transporter AmpG 2 (408 aa).

12 consecutive transmembrane segments (helical) span residues 11 to 31, 49 to 69, 84 to 104, 110 to 130, 154 to 174, 177 to 197, 224 to 244, 261 to 281, 294 to 311, 315 to 337, 353 to 373, and 382 to 402; these read IFNI…YLLT, IGLF…GPLL, YCLV…TSFN, TPFV…DMLI, FRIG…IISW, VYRT…FYPL, WIVI…LSIM, IGYK…GGFL, VLIY…LYFL, IISL…SPFF, IALI…ISGY, and YFFI…LYLP.

Belongs to the major facilitator superfamily.

Its subcellular location is the cell inner membrane. In Rickettsia typhi (strain ATCC VR-144 / Wilmington), this protein is Putative transporter AmpG 2 (ampG2).